The sequence spans 419 residues: L-rhamnose isomerase (419 aa).

Mn(2+)-binding residues include His-262, Asp-294, and Asp-296.

Belongs to the rhamnose isomerase family. As to quaternary structure, homotetramer. The cofactor is Mn(2+).

The protein resides in the cytoplasm. The catalysed reaction is L-rhamnopyranose = L-rhamnulose. It functions in the pathway carbohydrate degradation; L-rhamnose degradation; glycerone phosphate from L-rhamnose: step 1/3. Its function is as follows. Catalyzes the interconversion of L-rhamnose and L-rhamnulose. The chain is L-rhamnose isomerase from Escherichia fergusonii (strain ATCC 35469 / DSM 13698 / CCUG 18766 / IAM 14443 / JCM 21226 / LMG 7866 / NBRC 102419 / NCTC 12128 / CDC 0568-73).